Here is a 488-residue protein sequence, read N- to C-terminus: Glutamyl-tRNA(Gln) amidotransferase subunit A (488 aa).

Active-site charge relay system residues include K77 and S152. S176 (acyl-ester intermediate) is an active-site residue.

Belongs to the amidase family. GatA subfamily. As to quaternary structure, heterotrimer of A, B and C subunits.

It catalyses the reaction L-glutamyl-tRNA(Gln) + L-glutamine + ATP + H2O = L-glutaminyl-tRNA(Gln) + L-glutamate + ADP + phosphate + H(+). Functionally, allows the formation of correctly charged Gln-tRNA(Gln) through the transamidation of misacylated Glu-tRNA(Gln) in organisms which lack glutaminyl-tRNA synthetase. The reaction takes place in the presence of glutamine and ATP through an activated gamma-phospho-Glu-tRNA(Gln). The sequence is that of Glutamyl-tRNA(Gln) amidotransferase subunit A from Streptococcus gordonii (strain Challis / ATCC 35105 / BCRC 15272 / CH1 / DL1 / V288).